Consider the following 692-residue polypeptide: Single-strand DNA endonuclease ASTE1 (692 aa).

This sequence belongs to the asteroid family.

Functionally, structure-specific DNA endonuclease that specifically cleaves single-stranded DNA and 3' overhang DNA. The polypeptide is Single-strand DNA endonuclease ASTE1 (aste1a) (Danio rerio (Zebrafish)).